A 281-amino-acid chain; its full sequence is 2-dehydro-3-deoxyphosphooctonate aldolase (281 aa).

Belongs to the KdsA family.

It is found in the cytoplasm. The enzyme catalyses D-arabinose 5-phosphate + phosphoenolpyruvate + H2O = 3-deoxy-alpha-D-manno-2-octulosonate-8-phosphate + phosphate. It functions in the pathway carbohydrate biosynthesis; 3-deoxy-D-manno-octulosonate biosynthesis; 3-deoxy-D-manno-octulosonate from D-ribulose 5-phosphate: step 2/3. Its pathway is bacterial outer membrane biogenesis; lipopolysaccharide biosynthesis. The sequence is that of 2-dehydro-3-deoxyphosphooctonate aldolase from Pseudomonas fluorescens (strain Pf0-1).